Here is a 64-residue protein sequence, read N- to C-terminus: Large ribosomal subunit protein bL35 (64 aa).

Residues 1–17 (MKQKTHSGIKKRIKKTG) are compositionally biased toward basic residues. Residues 1–64 (MKQKTHSGIK…KRVNRLLGEG (64 aa)) form a disordered region. The span at 21-33 (LRREQANRRHLLE) shows a compositional bias: basic and acidic residues.

It belongs to the bacterial ribosomal protein bL35 family.

The protein is Large ribosomal subunit protein bL35 of Corynebacterium kroppenstedtii (strain DSM 44385 / JCM 11950 / CIP 105744 / CCUG 35717).